We begin with the raw amino-acid sequence, 134 residues long: ATP synthase epsilon chain (134 aa).

The protein belongs to the ATPase epsilon chain family. In terms of assembly, F-type ATPases have 2 components, CF(1) - the catalytic core - and CF(0) - the membrane proton channel. CF(1) has five subunits: alpha(3), beta(3), gamma(1), delta(1), epsilon(1). CF(0) has three main subunits: a, b and c.

The protein resides in the cellular thylakoid membrane. Produces ATP from ADP in the presence of a proton gradient across the membrane. The polypeptide is ATP synthase epsilon chain (Prochlorococcus marinus (strain MIT 9301)).